The primary structure comprises 404 residues: MKLPIYFDYAATTPVDPRVAQKMMQYMTMDGIFGNPASRSHRYGWQAEEAVDVARSQVADLINADHREIVFTSGATESNNLAIKGVAHFYQKKGKHIITSKTEHKAVLDTCRQLEREGFEVTYLEPGVNGIIPMERLEAAMRDDTILLSLMHVNNEIGVVHDIDAIGELCRSKGIIFHVDAAQSAGKLPIDVQITKVDLMSISGHKMYGPKGIGALYVRRKPRIRLESQMHGGGHERGMRSGTLATHQIVGLGEAAAIAKADMESDNARIHALRDRLWNGIKDIEETYVNGDFEQRYCGNLNVSFNFVEGESLMMALKDLAVSSGSACTSASLEPSYVLRALGLSDEMAHSSIRFSIGRFTTEEEVDYAIGIIQGSIGKLREMSPLWEMFKDGVDLSKVEWVHH.

Residues 75–76 (AT), N155, Q183, and 203–205 (SGH) each bind pyridoxal 5'-phosphate. K206 carries the N6-(pyridoxal phosphate)lysine modification. T243 is a pyridoxal 5'-phosphate binding site. Residue C328 is the Cysteine persulfide intermediate of the active site. C328 is a [2Fe-2S] cluster binding site.

Belongs to the class-V pyridoxal-phosphate-dependent aminotransferase family. NifS/IscS subfamily. As to quaternary structure, homodimer. Forms a heterotetramer with IscU, interacts with other sulfur acceptors. It depends on pyridoxal 5'-phosphate as a cofactor.

The protein resides in the cytoplasm. The enzyme catalyses (sulfur carrier)-H + L-cysteine = (sulfur carrier)-SH + L-alanine. It functions in the pathway cofactor biosynthesis; iron-sulfur cluster biosynthesis. Its function is as follows. Master enzyme that delivers sulfur to a number of partners involved in Fe-S cluster assembly, tRNA modification or cofactor biosynthesis. Catalyzes the removal of elemental sulfur atoms from cysteine to produce alanine. Functions as a sulfur delivery protein for Fe-S cluster synthesis onto IscU, an Fe-S scaffold assembly protein, as well as other S acceptor proteins. This is Cysteine desulfurase IscS from Shewanella amazonensis (strain ATCC BAA-1098 / SB2B).